The sequence spans 500 residues: MGNLRFYNTLTRKKEDFIPIDSSKVRLYVCGPTVYDYAHIGNARPVIVFDILFRLLRHVYGKDHVIYARNVTDVDDKINARAIREYPKLTLNDAIHQLTERTYDQFQQDTEALGCLLPTYQPRATDHLEEMRSLIERLLEKGHAYIAENHVLFSVNSIKNNPLYGVFAKRSLNEMKAGARVDVAPYKRDDMDFVLWKPSTQQEPGWKSPAGISVLGRPGWHIECSAMSMAKLLTPYGGGLACDDLSVNVFDIHGGGIDLIFPHHENEIAQSCSVFGTERMANFWMHNGFLQVEGRKMSKSFGNFITIRSILESNFVEFSNAMTDDLKQSWAGLSARFSMLQTHYREPLNWTAQRLAQSSSELYRWYELLRCERSCLDNGGVIDASLISTLSDDLNTPNSFTLLRKFYKEENAVALVQGMDLFGLLRQEWVREIECPLFVKGIDLDSKFIDQRIAERLLFIQNKEWAAADEIRNELAKKGIALKDEKDSQTGERITTWEVK.

Cys30 provides a ligand contact to Zn(2+). Residues 32-42 (PTVYDYAHIGN) carry the 'HIGH' region motif. Positions 224, 263, and 267 each coordinate Zn(2+). Residues 296–300 (KMSKS) carry the 'KMSKS' region motif. Lys299 is a binding site for ATP.

Belongs to the class-I aminoacyl-tRNA synthetase family. In terms of assembly, monomer. It depends on Zn(2+) as a cofactor.

The protein resides in the cytoplasm. The enzyme catalyses tRNA(Cys) + L-cysteine + ATP = L-cysteinyl-tRNA(Cys) + AMP + diphosphate. This chain is Cysteine--tRNA ligase, found in Bartonella bacilliformis (strain ATCC 35685 / KC583 / Herrer 020/F12,63).